The sequence spans 914 residues: Protein translocase subunit SecA (914 aa).

Residues Q87, 105–109 (GEGKT), and D500 contribute to the ATP site. The Zn(2+) site is built by C898, C900, C909, and H910.

The protein belongs to the SecA family. Monomer and homodimer. Part of the essential Sec protein translocation apparatus which comprises SecA, SecYEG and auxiliary proteins SecDF-YajC and YidC. Zn(2+) serves as cofactor.

It is found in the cell inner membrane. Its subcellular location is the cytoplasm. The catalysed reaction is ATP + H2O + cellular proteinSide 1 = ADP + phosphate + cellular proteinSide 2.. Its function is as follows. Part of the Sec protein translocase complex. Interacts with the SecYEG preprotein conducting channel. Has a central role in coupling the hydrolysis of ATP to the transfer of proteins into and across the cell membrane, serving as an ATP-driven molecular motor driving the stepwise translocation of polypeptide chains across the membrane. In Acidithiobacillus ferrooxidans (strain ATCC 23270 / DSM 14882 / CIP 104768 / NCIMB 8455) (Ferrobacillus ferrooxidans (strain ATCC 23270)), this protein is Protein translocase subunit SecA.